Reading from the N-terminus, the 364-residue chain is MKKAILMMTFGSPEEITFEGVADFFTNIRRGVRPQDHEIQTLYDNYVRIGGTPLQKITRQEVALVEARLGNEYSVYFANKFSSPFIPDVIGQMEADGIEQCICLILEPHYSFYSVMGYEKFLESKQIQFLVIKDWYQEEALLNYWADEIAKILKEEVKQDSFKVIFSAHSVPIFALDFGDPYIDQIFENSKLVAEKLGLSSEQYTNTWQSESDIGIPWIKPDVLEYLREQTEHPDHYIFVPISFISEHIEVLFDNDVECYDLCQEFGVNYHRPPMPNTDSRLIDALVNTVRVNENQEFKEFLPEEETFDELVPSDETKNILAESEDLQMPEFVKKLIEKKGRENVKMPYLIKKMLEKAGKLPKE.

Positions 29 and 118 each coordinate Fe-coproporphyrin III. Residues histidine 169 and glutamate 250 each coordinate Fe(2+).

This sequence belongs to the ferrochelatase family.

The protein resides in the cytoplasm. The enzyme catalyses Fe-coproporphyrin III + 2 H(+) = coproporphyrin III + Fe(2+). It functions in the pathway porphyrin-containing compound metabolism; protoheme biosynthesis. Involved in coproporphyrin-dependent heme b biosynthesis. Catalyzes the insertion of ferrous iron into coproporphyrin III to form Fe-coproporphyrin III. The chain is Coproporphyrin III ferrochelatase from Streptococcus pneumoniae (strain ATCC 700669 / Spain 23F-1).